Consider the following 622-residue polypeptide: Prolactin receptor (622 aa).

The first 24 residues, 1–24, serve as a signal peptide directing secretion; it reads MKENVASATVFTLLLFLNTCLLNG. The Extracellular portion of the chain corresponds to 25-234; it reads QLPPGKPEIF…QIPSDFTMND (210 aa). Fibronectin type-III domains are found at residues 27–128 and 129–229; these read PPGK…VQPD and PPLE…IPSD. An intrachain disulfide couples cysteine 36 to cysteine 46. The N-linked (GlcNAc...) asparagine glycan is linked to asparagine 59. Cysteines 75 and 86 form a disulfide. Residue asparagine 104 is glycosylated (N-linked (GlcNAc...) asparagine). Residues aspartate 211 and histidine 212 each coordinate Zn(2+). The WSXWS motif signature appears at 215–219; that stretch reads WSAWS. The N-linked (GlcNAc...) asparagine glycan is linked to asparagine 233. Residues 235–258 form a helical membrane-spanning segment; that stretch reads TTVWISVAVLSAVICLIIVWAVAL. Over 259–622 the chain is Cytoplasmic; sequence KGYSMVTCIF…DPACFTHSFH (364 aa). Positions 267–275 match the Box 1 motif motif; it reads IFPPVPGPK. Disordered stretches follow at residues 326–378, 461–505, and 520–545; these read MSVH…YDPE, SSQT…GSAK, and ALSLLPKQRENSGKPKKPGTPENNKE. Basic and acidic residues predominate over residues 466–486; that stretch reads KSREEGKATQQREVESFHSET.

It belongs to the type I cytokine receptor family. Type 1 subfamily. In terms of assembly, homodimer upon hormone binding. Interacts with SMARCA1. Interacts with GH1. Interacts with CSH. Interacts with NEK3 and VAV2 and this interaction is prolactin-dependent. Expressed in breast, placenta, kidney, liver and pancreas.

It is found in the membrane. The protein resides in the secreted. Functionally, this is a receptor for the anterior pituitary hormone prolactin (PRL). Acts as a prosurvival factor for spermatozoa by inhibiting sperm capacitation through suppression of SRC kinase activation and stimulation of AKT. Isoform 4 is unable to transduce prolactin signaling. Isoform 6 is unable to transduce prolactin signaling. The protein is Prolactin receptor (PRLR) of Homo sapiens (Human).